The chain runs to 67 residues: Prokaryotic ubiquitin-like protein Pup (67 aa).

Residues 1-36 (MPQQFEQPQAQQAATQEDDALATTQAAAQTESADQA) form a disordered region. The ARC ATPase binding stretch occupies residues 23 to 61 (TTQAAAQTESADQADVLDDILDDIESTLETNAEEYVNSF). E67 is covalently cross-linked (Isoglutamyl lysine isopeptide (Glu-Lys) (interchain with K-? in acceptor proteins)).

This sequence belongs to the prokaryotic ubiquitin-like protein family. Strongly interacts with the proteasome-associated ATPase ARC through a hydrophobic interface; the interacting region of Pup lies in its C-terminal half. There is one Pup binding site per ARC hexamer ring.

It participates in protein degradation; proteasomal Pup-dependent pathway. In terms of biological role, protein modifier that is covalently attached to lysine residues of substrate proteins, thereby targeting them for proteasomal degradation. The tagging system is termed pupylation. In Bifidobacterium longum (strain DJO10A), this protein is Prokaryotic ubiquitin-like protein Pup.